The following is a 62-amino-acid chain: Inner membrane protein p12 (62 aa).

The chain crosses the membrane as a helical span at residues 16–36 (LLIVAIIVVIMAIMLYYFWWM).

This sequence belongs to the asfivirus inner membrane protein p12 family. As to quaternary structure, homomultimer; disulfide-linked. In terms of processing, not glycosylated.

The protein localises to the virion membrane. In African swine fever virus (isolate Tick/Malawi/Lil 20-1/1983) (ASFV), this protein is Inner membrane protein p12.